A 367-amino-acid chain; its full sequence is UDP-N-acetylglucosamine--N-acetylmuramyl-(pentapeptide) pyrophosphoryl-undecaprenol N-acetylglucosamine transferase (367 aa).

UDP-N-acetyl-alpha-D-glucosamine contacts are provided by residues 15–17 (TGG), Asn-127, Arg-163, Ser-191, Ile-249, and Gln-294.

Belongs to the glycosyltransferase 28 family. MurG subfamily.

The protein resides in the cell inner membrane. It catalyses the reaction di-trans,octa-cis-undecaprenyl diphospho-N-acetyl-alpha-D-muramoyl-L-alanyl-D-glutamyl-meso-2,6-diaminopimeloyl-D-alanyl-D-alanine + UDP-N-acetyl-alpha-D-glucosamine = di-trans,octa-cis-undecaprenyl diphospho-[N-acetyl-alpha-D-glucosaminyl-(1-&gt;4)]-N-acetyl-alpha-D-muramoyl-L-alanyl-D-glutamyl-meso-2,6-diaminopimeloyl-D-alanyl-D-alanine + UDP + H(+). The protein operates within cell wall biogenesis; peptidoglycan biosynthesis. Functionally, cell wall formation. Catalyzes the transfer of a GlcNAc subunit on undecaprenyl-pyrophosphoryl-MurNAc-pentapeptide (lipid intermediate I) to form undecaprenyl-pyrophosphoryl-MurNAc-(pentapeptide)GlcNAc (lipid intermediate II). The chain is UDP-N-acetylglucosamine--N-acetylmuramyl-(pentapeptide) pyrophosphoryl-undecaprenol N-acetylglucosamine transferase from Burkholderia cenocepacia (strain ATCC BAA-245 / DSM 16553 / LMG 16656 / NCTC 13227 / J2315 / CF5610) (Burkholderia cepacia (strain J2315)).